A 557-amino-acid chain; its full sequence is Formate--tetrahydrofolate ligase (557 aa).

65–72 is a binding site for ATP; the sequence is TPAGEGKT.

Belongs to the formate--tetrahydrofolate ligase family. In terms of assembly, homotetramer.

The enzyme catalyses (6S)-5,6,7,8-tetrahydrofolate + formate + ATP = (6R)-10-formyltetrahydrofolate + ADP + phosphate. Its pathway is one-carbon metabolism; tetrahydrofolate interconversion. In Methylorubrum extorquens (strain ATCC 14718 / DSM 1338 / JCM 2805 / NCIMB 9133 / AM1) (Methylobacterium extorquens), this protein is Formate--tetrahydrofolate ligase (fhs).